The primary structure comprises 296 residues: Peptide transport system permease protein SapC (296 aa).

Over M1–S28 the chain is Cytoplasmic. The chain crosses the membrane as a helical span at residues A29 to F49. The Periplasmic portion of the chain corresponds to A50–T98. A helical membrane pass occupies residues V99–F119. The 186-residue stretch at V99–G284 folds into the ABC transmembrane type-1 domain. Residues A120–H133 are Cytoplasmic-facing. The chain crosses the membrane as a helical span at residues I134–A154. Over G155 to D196 the chain is Periplasmic. A helical membrane pass occupies residues G197–V217. Residues T218–R222 are Cytoplasmic-facing. A helical membrane pass occupies residues A223–L243. Over P244–E257 the chain is Periplasmic. The chain crosses the membrane as a helical span at residues L258–L278. Topologically, residues L279–E296 are cytoplasmic.

The protein belongs to the binding-protein-dependent transport system permease family. OppBC subfamily.

The protein localises to the cell inner membrane. Involved in a peptide intake transport system that plays a role in the resistance to antimicrobial peptides. This Escherichia coli O6:H1 (strain CFT073 / ATCC 700928 / UPEC) protein is Peptide transport system permease protein SapC (sapC).